The sequence spans 1082 residues: TNF receptor-associated factor homolog 1b (1082 aa).

The segment at 1 to 54 is disordered; that stretch reads MAEAVDEDSGVGRSLEESSNGQHSQAGEALSEWRSSGQVENGTPSTSPSYWDID. Residue Ala-2 is modified to N-acetylalanine. A compositionally biased stretch (polar residues) spans 33-49; it reads WRSSGQVENGTPSTSPS. The region spanning 67-198 is the MATH domain; it reads YGQYTWKIPK…SGCLTIEAKV (132 aa). 6 disordered regions span residues 358–388, 440–666, 697–762, 780–800, 812–841, and 858–889; these read LPPK…ERDE, TEQR…SNVG, SIVN…QVVL, LSAP…APII, SSVQ…NQQT, and SSSS…PTSS. Basic and acidic residues-rich tracts occupy residues 359–388 and 440–453; these read PPKD…ERDE and TEQR…EREK. Residues 446–507 are a coiled coil; it reads RGAAEREKKS…EEEKDSVTEK (62 aa). A compositionally biased stretch (basic residues) spans 454 to 471; sequence KSKKKQAKQKRNKNKGKD. The span at 472 to 488 shows a compositional bias: basic and acidic residues; it reads KRKEEKVSFATHAKDLE. Composition is skewed to low complexity over residues 519–534 and 560–573; these read GDVS…SADI and SSEG…ISIS. Polar residues-rich tracts occupy residues 588 to 630 and 645 to 666; these read DDSS…QQVK and QPST…SNVG. Low complexity-rich tracts occupy residues 858–871 and 878–889; these read SSSS…SSHG and PSSSYSQAPTSS.

In terms of assembly, forms homooligomers. Interacts with SNC1, RPS2 and CPR1/CPR30. Interacts with ATG6.

It localises to the cytoplasm. It is found in the cell membrane. In terms of biological role, functions redundantly with TRAF1A in the regulation of plant immune response. Contributes to the turnover of the nucleotide-binding domain and leucine-rich repeat-containing (NB-LRR) immune receptors SNC1 and RPS2. May associate with an E3 ubiquitin-protein ligase complex, which modulates ubiquitination and subsequent degradation of NB-LRR immune sensors to maintain their homeostasis. Functions redundantly with TRAF1A in the regulation of autophagosome formation. Required for SINAT1- and SINAT2-mediated ubiquitination and destabilization of ATG6. Functions as a molecular adapter that helps to regulate autophagy by modulating ATG6 stability. The polypeptide is TNF receptor-associated factor homolog 1b (Arabidopsis thaliana (Mouse-ear cress)).